Consider the following 449-residue polypeptide: Glucose-6-phosphate isomerase (449 aa).

Glutamate 291 (proton donor) is an active-site residue. Residues histidine 312 and lysine 426 contribute to the active site.

It belongs to the GPI family.

It is found in the cytoplasm. The catalysed reaction is alpha-D-glucose 6-phosphate = beta-D-fructose 6-phosphate. It participates in carbohydrate biosynthesis; gluconeogenesis. It functions in the pathway carbohydrate degradation; glycolysis; D-glyceraldehyde 3-phosphate and glycerone phosphate from D-glucose: step 2/4. Its function is as follows. Catalyzes the reversible isomerization of glucose-6-phosphate to fructose-6-phosphate. The polypeptide is Glucose-6-phosphate isomerase (Streptococcus agalactiae serotype Ia (strain ATCC 27591 / A909 / CDC SS700)).